Here is a 190-residue protein sequence, read N- to C-terminus: Ribosome hibernation promotion factor (190 aa).

Belongs to the HPF/YfiA ribosome-associated protein family. Long HPF subfamily. Interacts with 100S ribosomes.

The protein resides in the cytoplasm. Its function is as follows. Required for dimerization of active 70S ribosomes into 100S ribosomes in stationary phase; 100S ribosomes are translationally inactive and sometimes present during exponential growth. In Staphylococcus saprophyticus subsp. saprophyticus (strain ATCC 15305 / DSM 20229 / NCIMB 8711 / NCTC 7292 / S-41), this protein is Ribosome hibernation promotion factor.